We begin with the raw amino-acid sequence, 251 residues long: Pyruvate formate-lyase-activating enzyme (251 aa).

Residues Val-15–Asn-244 enclose the Radical SAM core domain. Residues Cys-29, Cys-33, and Cys-36 each coordinate [4Fe-4S] cluster. Residues Tyr-35–His-37, Gly-79, Asp-134–Lys-136, and His-207 contribute to the S-adenosyl-L-methionine site.

Belongs to the organic radical-activating enzymes family. The cofactor is [4Fe-4S] cluster.

Its subcellular location is the cytoplasm. It carries out the reaction glycyl-[formate C-acetyltransferase] + reduced [flavodoxin] + S-adenosyl-L-methionine = glycin-2-yl radical-[formate C-acetyltransferase] + semiquinone [flavodoxin] + 5'-deoxyadenosine + L-methionine + H(+). Functionally, activation of pyruvate formate-lyase under anaerobic conditions by generation of an organic free radical, using S-adenosylmethionine and reduced flavodoxin as cosubstrates to produce 5'-deoxy-adenosine. The sequence is that of Pyruvate formate-lyase-activating enzyme (pflA) from Staphylococcus epidermidis (strain ATCC 12228 / FDA PCI 1200).